Consider the following 383-residue polypeptide: uncharacterized protein (383 aa).

This sequence to V.anguillarum virulence protein VirA.

Functionally, could have an enzymatic function. This is an uncharacterized protein from Sinorhizobium fredii (strain NBRC 101917 / NGR234).